A 661-amino-acid polypeptide reads, in one-letter code: Probable potassium transport system protein Kup 1 (661 aa).

Over residues 1-11 the composition is skewed to gly residues; it reads MKGLFPAGGGN. A disordered region spans residues 1 to 38; the sequence is MKGLFPAGGGNPPSSYLSRFLPHRKERSPENVTSGRNG. 12 helical membrane passes run 48–68, 85–105, 139–159, 177–197, 207–227, 251–271, 286–306, 324–344, 384–404, 405–425, 436–456, and 458–478; these read LALGALGIVYGDIGTSPLYTI, IMGVLSLILWSLTMVVSIKYI, AVVVMAALTGAALLYGDGFIT, AAKNLIVPLACGILLGLFLVQ, IFGPVMLVWFATIATLGLLCI, VHGLVVLGSVVLSITGGEALY, WFAMVFPSLLLNYFGQGAALL, LLLPMVALATMASIIASQAMI, LMMVVCIGLVLVFRASSGLAG, AYGVAVTANMAITSVVYFFVA, TAPLVGLFLVFDITYFGSNLL, and FFDGGWFPLAVALVIVIVMAS.

The protein belongs to the HAK/KUP transporter (TC 2.A.72) family.

It localises to the cell inner membrane. It catalyses the reaction K(+)(in) + H(+)(in) = K(+)(out) + H(+)(out). Its function is as follows. Transport of potassium into the cell. Likely operates as a K(+):H(+) symporter. The protein is Probable potassium transport system protein Kup 1 of Syntrophobacter fumaroxidans (strain DSM 10017 / MPOB).